The following is a 46-amino-acid chain: Myoregulin (46 aa).

The Cytoplasmic portion of the chain corresponds to 1-21 (MTGKNWILISTTTPKSLEDEI). The chain crosses the membrane as a helical span at residues 22–42 (VGRLLKILFVIFVDLISIIYV). Residues 43-46 (VITS) are Lumenal-facing.

In terms of assembly, homooligomer. Monomer. Interacts with ATP2A1/SERCA1. Interacts as a monomer with ATP2A2/SERCA2; the interaction inhibits ATP2A2 activity.

It is found in the sarcoplasmic reticulum membrane. In terms of biological role, inhibits the activity of ATP2A1/SERCA1 ATPase in sarcoplasmic reticulum by decreasing the apparent affinity of the ATPase for Ca(2+), thereby acting as a key regulator of skeletal muscle activity. Its high expression in adult skeletal muscle, suggests that it constitutes the predominant regulator of ATP2A1/SERCA1 in adult skeletal muscle. Also inhibits the activity of ATP2A2/SERCA2 and ATP2A3/SERCA3. The protein is Myoregulin of Homo sapiens (Human).